A 609-amino-acid polypeptide reads, in one-letter code: mRNA-decapping enzyme 1B (609 aa).

Ala2 is modified (N-acetylalanine). Position 147 is a phosphoserine (Ser147). Position 191 is a phosphotyrosine (Tyr191). Disordered regions lie at residues Pro201–Glu222 and Thr243–Arg264. Residues Ser205–Leu219 are compositionally biased toward polar residues. Residues Ser272 and Ser333 each carry the phosphoserine modification. 2 disordered regions span residues Thr326–Asn345 and Thr359–Val438. Positions Asn336–Asn345 are enriched in polar residues. Over residues Pro368–Ala378 the composition is skewed to low complexity. Thr389 is subject to Phosphothreonine. Residues Gln418–Val438 show a composition bias toward polar residues. Ser440 and Ser503 each carry phosphoserine.

The protein belongs to the DCP1 family. Interacts with DCP1A.

The protein localises to the cytoplasm. It is found in the nucleus. The enzyme catalyses a 5'-end (N(7)-methyl 5'-triphosphoguanosine)-ribonucleoside in mRNA + H2O = N(7)-methyl-GDP + a 5'-end phospho-ribonucleoside in mRNA + 2 H(+). In terms of biological role, may play a role in the degradation of mRNAs, both in normal mRNA turnover and in nonsense-mediated mRNA decay. May remove the 7-methyl guanine cap structure from mRNA molecules, yielding a 5'-phosphorylated mRNA fragment and 7m-GDP. This is mRNA-decapping enzyme 1B (DCP1B) from Pongo abelii (Sumatran orangutan).